A 108-amino-acid polypeptide reads, in one-letter code: Peptidyl-prolyl cis-trans isomerase FKBP1B (108 aa).

In terms of domain architecture, PPIase FKBP-type spans 20 to 108; it reads GQTCVVHYTG…IFGVELLNLE (89 aa).

Belongs to the FKBP-type PPIase family. FKBP1 subfamily. Identified in a complex composed of RYR2, FKBP1B, PKA catalytic subunit, PRKAR2A, AKAP6, and the protein phosphatases PP2A and PP1. Interacts directly with RYR2.

The protein resides in the cytoplasm. It localises to the sarcoplasmic reticulum. The enzyme catalyses [protein]-peptidylproline (omega=180) = [protein]-peptidylproline (omega=0). Its activity is regulated as follows. Inhibited by both FK506 and rapamycin. In terms of biological role, has the potential to contribute to the immunosuppressive and toxic effects of FK506 and rapamycin. PPIases accelerate the folding of proteins. It catalyzes the cis-trans isomerization of proline imidic peptide bonds in oligopeptides. The sequence is that of Peptidyl-prolyl cis-trans isomerase FKBP1B (FKBP1B) from Oryctolagus cuniculus (Rabbit).